Consider the following 297-residue polypeptide: Bifunctional protein FolD (297 aa).

NADP(+) contacts are provided by residues 169–171 (GRS), serine 196, and isoleucine 237.

Belongs to the tetrahydrofolate dehydrogenase/cyclohydrolase family. As to quaternary structure, homodimer.

It carries out the reaction (6R)-5,10-methylene-5,6,7,8-tetrahydrofolate + NADP(+) = (6R)-5,10-methenyltetrahydrofolate + NADPH. It catalyses the reaction (6R)-5,10-methenyltetrahydrofolate + H2O = (6R)-10-formyltetrahydrofolate + H(+). The protein operates within one-carbon metabolism; tetrahydrofolate interconversion. Catalyzes the oxidation of 5,10-methylenetetrahydrofolate to 5,10-methenyltetrahydrofolate and then the hydrolysis of 5,10-methenyltetrahydrofolate to 10-formyltetrahydrofolate. The protein is Bifunctional protein FolD of Salinibacter ruber (strain DSM 13855 / M31).